A 315-amino-acid polypeptide reads, in one-letter code: MAAPEVLESDVSSSITLLKNLQEQVMAVTAQIQALTTKVRAGTYSTEKGLSFLEVKDQLLLMYLMDLSHLILDKASGASLQGHPAVLRLVEIRTVLEKLRPLDQKLKYQIDKLVKTAVTGSLSENDPLRFKPHPSNMVSKLSSEDEEESEAEEGQSEASGKKSAKGSAKKYVPPRLVPVHYDETEAEREQKRLEKAKRRALSSSVIRELKEQYSDAPEEIRDARHPHVTRQSQEDQHRVNYEESMMVRLSVSKREKGLRRRASAMSSQLHSLTHFSDISALTGGTAHLDEDQNPVKKRKKLPKKGRKKKGFRRRW.

N-acetylalanine is present on Ala2. The stretch at 7 to 41 (LESDVSSSITLLKNLQEQVMAVTAQIQALTTKVRA) forms a coiled coil. The interval 41 to 174 (AGTYSTEKGL…KGSAKKYVPP (134 aa)) is necessary for interaction with EIF4E. Ser121, Ser142, and Ser143 each carry phosphoserine. The interval 123 to 190 (SENDPLRFKP…YDETEAEREQ (68 aa)) is disordered. Over residues 144 to 155 (EDEEESEAEEGQ) the composition is skewed to acidic residues. Basic and acidic residues predominate over residues 180 to 190 (HYDETEAEREQ). Residues 181 to 203 (YDETEAEREQKRLEKAKRRALSS) are a coiled coil. Phosphoserine is present on residues Ser204 and Ser214. Composition is skewed to basic and acidic residues over residues 212–225 (QYSD…DARH) and 232–241 (SQEDQHRVNY). Disordered regions lie at residues 212–243 (QYSD…NYEE) and 284–315 (GTAH…RRRW). The segment covering 295 to 315 (VKKRKKLPKKGRKKKGFRRRW) has biased composition (basic residues).

The protein belongs to the SAS10 family. Interacts with CPEB1 and EIF4E. Expressed in testis, ovary, spleen, kidney, hippocampus and cerebellum (at protein level). Expressed in testis, ovary, spleen, kidney, brain.

The protein localises to the nucleus. The protein resides in the nucleolus. Its subcellular location is the chromosome. It is found in the centromere. It localises to the cytoplasm. The protein localises to the cell projection. The protein resides in the axon. Its subcellular location is the dendrite. It is found in the filopodium. In terms of biological role, part of the small subunit (SSU) processome, first precursor of the small eukaryotic ribosomal subunit. During the assembly of the SSU processome in the nucleolus, many ribosome biogenesis factors, an RNA chaperone and ribosomal proteins associate with the nascent pre-rRNA and work in concert to generate RNA folding, modifications, rearrangements and cleavage as well as targeted degradation of pre-ribosomal RNA by the RNA exosome. Its dissociation from the complex determines the transition from state pre-A1 to state pre-A1*. Inhibits mRNA translation in a cytoplasmic polyadenylation element (CPE)-dependent manner. The chain is Neuroguidin (Ngdn) from Mus musculus (Mouse).